The following is a 340-amino-acid chain: Putative phosphatidylcholine:ceramide cholinephosphotransferase 3 (340 aa).

Residues 1 to 25 (MGSVSKTVISARGASPDDEQNGTKN) form a disordered region. Helical transmembrane passes span 36–56 (CIFLFFFLFIAGMSNWAVLAY), 81–101 (SSLGDFCVALCIVMLGALLVI), 178–198 (LLFSGHTLVMVTCSLAVAYYL), and 202–222 (IKPLQWVSHVACLIGMICMTI). His-183 is a catalytic residue. Topologically, residues 223-340 (SRTHYTIDVV…SSSSTYPLPC (118 aa)) are cytoplasmic. Catalysis depends on residues His-226 and Asp-230. Residues 294–313 (STPRGQERGGASAESSDSSV) form a disordered region.

Belongs to the sphingomyelin synthase family.

It is found in the membrane. The catalysed reaction is an N-acyl-sphingoid base + a 1,2-diacyl-sn-glycero-3-phosphocholine = an N-(acyl)-sphingosylphosphocholine + a 1,2-diacyl-sn-glycerol. The enzyme catalyses an N-acylsphing-4-enine + a 1,2-diacyl-sn-glycero-3-phosphocholine = a sphingomyelin + a 1,2-diacyl-sn-glycerol. It catalyses the reaction an N-acyl-15-methylhexadecasphing-4-enine + a 1,2-diacyl-sn-glycero-3-phosphocholine = an N-acyl-15-methylhexadecasphing-4-enine-1-phosphocholine + a 1,2-diacyl-sn-glycerol. It functions in the pathway lipid metabolism; sphingolipid metabolism. Its function is as follows. Bidirectional lipid cholinephosphotransferase capable of converting phosphatidylcholine (PC) and ceramide to sphingomyelin (SM) and diacylglycerol (DAG) and vice versa. Direction is dependent on the relative concentrations of DAG and ceramide as phosphocholine acceptors. Directly and specifically recognizes the choline head group on the substrate. Also requires two fatty chains on the choline-P donor molecule in order to be recognized efficiently as a substrate. Does not function strictly as a SM synthase. C.elegans contains specific sphingoid bases, which are unique or different in structure compared to the sphingoid bases found in other animals. Two examples of these distinctive compounds are: 15-methylhexadecasphinganine and 15-methylhexadecasphing-4-enine. The polypeptide is Putative phosphatidylcholine:ceramide cholinephosphotransferase 3 (sms-3) (Caenorhabditis elegans).